Here is a 651-residue protein sequence, read N- to C-terminus: Tudor domain-containing protein 3 (651 aa).

Positions L193–S233 constitute a UBA domain. 3 disordered regions span residues N234–S271, E287–V369, and Y381–P450. S256 bears the Phosphoserine mark. Positions S291–K312 are enriched in polar residues. Positions D313–R338 are enriched in basic and acidic residues. The residue at position 345 (S345) is a Phosphoserine. Residue K470 forms a Glycyl lysine isopeptide (Lys-Gly) (interchain with G-Cter in SUMO2) linkage. One can recognise a Tudor domain in the interval M555–E615. Residues E624–P633 show a composition bias toward basic and acidic residues. Residues E624–N651 form a disordered region. The tract at residues G631 to N651 is EBM motif; may mediate interaction with the EJC.

In terms of assembly, component of mRNA stress granules. Interacts with FMR1, FXR1, FXR2, EWSR1, FUS, SERBP1, EEF1A1 and DDX3X or DDX3Y, and with the small nuclear ribonucleoprotein-associated proteins SNRPB and SNRPN. Interacts with 'Lys-48'-linked tetra-ubiquitin, but not with monoubiquitin or 'Lys-63'-linked ubiquitin chains. May interact with the exon junction complex (EJC) composed at least of CASC3, EIF4A3, MAGOH and RBM8A. Interacts with POLR2A (via the C-terminal domain (CTD)). In terms of processing, probably cleaved by enteroviral 2A proteinase. In terms of tissue distribution, detected in heart, brain, placenta, lung, liver, skeletal muscle, kidney and pancreas.

It localises to the cytoplasm. Its subcellular location is the nucleus. Scaffolding protein that specifically recognizes and binds dimethylarginine-containing proteins. Plays a role in the regulation of translation of target mRNAs by binding Arg/Gly-rich motifs (GAR) in dimethylarginine-containing proteins. In nucleus, acts as a coactivator: recognizes and binds asymmetric dimethylation on the core histone tails associated with transcriptional activation (H3R17me2a and H4R3me2a) and recruits proteins at these arginine-methylated loci. In cytoplasm, acts as an antiviral factor that participates in the assembly of stress granules together with G3BP1. The sequence is that of Tudor domain-containing protein 3 (TDRD3) from Homo sapiens (Human).